Reading from the N-terminus, the 183-residue chain is MQCWQQPFLRFLQQPFFLATASLAGSSSSFNVLIPKRDEDGDGEGPGDVTAGVSRAAGSPSGWEAPWVQQPRCCRRATPVCCAGQGPPRSLQQGGSEVLLGQLCSPEPDWLPSSGPKVAKQVFQVAAELLQHPEHFVPSSVPEGCVHKPGSTCDGSLKGRAYPSCVPKRDPEHSREESHPLSG.

The signal sequence occupies residues 1–29; the sequence is MQCWQQPFLRFLQQPFFLATASLAGSSSS. Residues 149–183 are disordered; that stretch reads PGSTCDGSLKGRAYPSCVPKRDPEHSREESHPLSG. Over residues 167–183 the composition is skewed to basic and acidic residues; it reads PKRDPEHSREESHPLSG.

It localises to the secreted. This is an uncharacterized protein from Homo sapiens (Human).